We begin with the raw amino-acid sequence, 376 residues long: MSDVLELTCDLIARASVTPADAGCQAAIAQRLRAAGFGCEHLRLGEVENLWATHGSGAPVLVLLGHTDVVPPGPREAWTSDPFDPQIRDGVLYGRGAADMKGSVAAFVVAAEQFVAAHPTHSGTLAVLLTSDEEGDAIDGVRRVAEVFRERGQTIDWCITGEPSSTERLGDLLRVGRRGSLSGTLTVKGVQGHVAYPHKARNPIHLAAPALAELVARQWDDGFESFPPTSLQLSNIHAGTGANNVIPGELQVAFNLRYTPHWDAPRLEAEITALLDRHALDYTLRWHRSGEPFYTPEGRLRSVAREVLGEFAGAPPEESTGGGTSDARFIAPLGAQCIEVGPVNASIHQVDEHVRVADLQALPALYRTLIERLLVE.

Residue His-66 participates in Zn(2+) binding. Asp-68 is an active-site residue. Position 99 (Asp-99) interacts with Zn(2+). The active-site Proton acceptor is Glu-133. Zn(2+) contacts are provided by Glu-134, Glu-162, and His-348.

It belongs to the peptidase M20A family. DapE subfamily. In terms of assembly, homodimer. It depends on Zn(2+) as a cofactor. Co(2+) serves as cofactor.

The enzyme catalyses N-succinyl-(2S,6S)-2,6-diaminopimelate + H2O = (2S,6S)-2,6-diaminopimelate + succinate. The protein operates within amino-acid biosynthesis; L-lysine biosynthesis via DAP pathway; LL-2,6-diaminopimelate from (S)-tetrahydrodipicolinate (succinylase route): step 3/3. Catalyzes the hydrolysis of N-succinyl-L,L-diaminopimelic acid (SDAP), forming succinate and LL-2,6-diaminopimelate (DAP), an intermediate involved in the bacterial biosynthesis of lysine and meso-diaminopimelic acid, an essential component of bacterial cell walls. This is Succinyl-diaminopimelate desuccinylase from Xanthomonas euvesicatoria pv. vesicatoria (strain 85-10) (Xanthomonas campestris pv. vesicatoria).